A 410-amino-acid polypeptide reads, in one-letter code: Argininosuccinate synthase (410 aa).

ATP is bound by residues 10-18 and alanine 37; that span reads AYSGGLDTS. 2 residues coordinate L-citrulline: tyrosine 90 and serine 95. Glycine 120 is a binding site for ATP. L-aspartate-binding residues include threonine 122, asparagine 126, and aspartate 127. Asparagine 126 contributes to the L-citrulline binding site. L-citrulline contacts are provided by arginine 130, serine 182, serine 191, glutamate 267, and tyrosine 279.

The protein belongs to the argininosuccinate synthase family. Type 1 subfamily. As to quaternary structure, homotetramer.

The protein localises to the cytoplasm. It catalyses the reaction L-citrulline + L-aspartate + ATP = 2-(N(omega)-L-arginino)succinate + AMP + diphosphate + H(+). The protein operates within amino-acid biosynthesis; L-arginine biosynthesis; L-arginine from L-ornithine and carbamoyl phosphate: step 2/3. The chain is Argininosuccinate synthase from Polynucleobacter asymbioticus (strain DSM 18221 / CIP 109841 / QLW-P1DMWA-1) (Polynucleobacter necessarius subsp. asymbioticus).